The chain runs to 377 residues: F-box protein At1g11810 (377 aa).

The F-box domain maps to 2–48 (TTTMSTLPVVLVDEILARVPITSLRSLRSTCKKWEASSKTNLVGGKA).

This chain is F-box protein At1g11810, found in Arabidopsis thaliana (Mouse-ear cress).